Reading from the N-terminus, the 156-residue chain is Aspartate 1-decarboxylase (156 aa).

The Schiff-base intermediate with substrate; via pyruvic acid role is filled by Ser29. Ser29 bears the Pyruvic acid (Ser) mark. Thr61 contributes to the substrate binding site. The Proton donor role is filled by Tyr62. Gly77 to Ala79 lines the substrate pocket.

It belongs to the PanD family. In terms of assembly, heterooctamer of four alpha and four beta subunits. Pyruvate serves as cofactor. Post-translationally, is synthesized initially as an inactive proenzyme, which is activated by self-cleavage at a specific serine bond to produce a beta-subunit with a hydroxyl group at its C-terminus and an alpha-subunit with a pyruvoyl group at its N-terminus.

It localises to the cytoplasm. The catalysed reaction is L-aspartate + H(+) = beta-alanine + CO2. The protein operates within cofactor biosynthesis; (R)-pantothenate biosynthesis; beta-alanine from L-aspartate: step 1/1. Its function is as follows. Catalyzes the pyruvoyl-dependent decarboxylation of aspartate to produce beta-alanine. This Rhodopirellula baltica (strain DSM 10527 / NCIMB 13988 / SH1) protein is Aspartate 1-decarboxylase.